Reading from the N-terminus, the 195-residue chain is Putative Tricorn-like protease N-terminal subunit (195 aa).

The protein belongs to the peptidase S41B family.

The protein localises to the cytoplasm. Its function is as follows. Degrades oligopeptides in a sequential manner. This is Putative Tricorn-like protease N-terminal subunit (triN) from Sulfurisphaera tokodaii (strain DSM 16993 / JCM 10545 / NBRC 100140 / 7) (Sulfolobus tokodaii).